A 135-amino-acid chain; its full sequence is Mini-ribonuclease 3 (135 aa).

D19 is a catalytic residue.

Belongs to the MrnC RNase family. In terms of assembly, homodimer. Mg(2+) serves as cofactor.

It localises to the cytoplasm. Its function is as follows. Involved in correct processing of both the 5' and 3' ends of 23S rRNA precursor. Processes 30S rRNA precursor transcript even in absence of ribonuclease 3 (Rnc); Rnc processes 30S rRNA into smaller rRNA precursors. The polypeptide is Mini-ribonuclease 3 (Gloeobacter violaceus (strain ATCC 29082 / PCC 7421)).